A 1215-amino-acid polypeptide reads, in one-letter code: DNA-directed RNA polymerase subunit beta' (1215 aa).

4 residues coordinate Zn(2+): Cys60, Cys62, Cys75, and Cys78. Residues Asp449, Asp451, and Asp453 each contribute to the Mg(2+) site. Residues Cys818, Cys892, Cys899, and Cys902 each coordinate Zn(2+).

It belongs to the RNA polymerase beta' chain family. As to quaternary structure, the RNAP catalytic core consists of 2 alpha, 1 beta, 1 beta' and 1 omega subunit. When a sigma factor is associated with the core the holoenzyme is formed, which can initiate transcription. It depends on Mg(2+) as a cofactor. The cofactor is Zn(2+).

The enzyme catalyses RNA(n) + a ribonucleoside 5'-triphosphate = RNA(n+1) + diphosphate. Its function is as follows. DNA-dependent RNA polymerase catalyzes the transcription of DNA into RNA using the four ribonucleoside triphosphates as substrates. This Limosilactobacillus fermentum (strain NBRC 3956 / LMG 18251) (Lactobacillus fermentum) protein is DNA-directed RNA polymerase subunit beta'.